Consider the following 743-residue polypeptide: MEASGSASWARVSKNLIERRAVKGCLLPTPSDVMDAAVMALKDATENVVSKHLFSVDRTNALSVIHTNAVPESIITTAILRDTNGEYRREYEDSAKCNLAATDLSQDGMWEVVIKSYWRYLRESSGAEVVDRGGVGNTTQSVLSVLILQSTFGKKRLSKNPFKHKGPNVSYKSNLENLRAAFTKIEKYMYYMRPNDPMTKSEDTELRLHELLAYVATCYRWLLWFMDLTDAKVLKNIDKGPVITHGPRETRPPDELVRRHLKSGPAISAGTGDALTLSTATADALIVLLRMSVSWTSHSWKSNTHGVTGAIVAAVELVTLIHHHLQYIINTIFAGYVCWLDGGVENSYLNSALRNQGRFDHFAGKLVPIMATLSWANMEKGTVMWFKYALAKSIVCHGSPTQHYLTVLDSIASKRTGAGLPPGATFGRTANFQGQFGCPPQGPLPAPPNSKTKSMFKRPGRGSVRSLKQLPASTPNMVSSATTYNAGGNTAATSGQGEEAIQIHASGELNDCIWYLNGTYSHQRSDSSSSDNSSCSSTETEYITISSTPSPTREVVYTDPLLGSDEEKDASPQPANTVSEYSSPANSGYMRPRSTLAEEIWQLRDSDYTPYMRPSRAGRPRLRLEDQTLQTLPGCKPPANSPEDNFEDTLFSSSQIYSDNAHSTFRPRARCVDDEYGLTALAALSASQAKARRVRLGTTTPTSANEATEKYTTPSSGGCIRRTLSTSESPESSPEQQERVSSL.

Disordered regions lie at residues 437-481 (GCPP…VSSA), 522-590 (HQRS…SGYM), and 693-743 (RVRL…VSSL). The segment covering 526 to 552 (DSSSSDNSSCSSTETEYITISSTPSPT) has biased composition (low complexity). Polar residues-rich tracts occupy residues 573–586 (QPAN…SPAN) and 697–716 (GTTT…TPSS). Over residues 722–743 (RTLSTSESPESSPEQQERVSSL) the composition is skewed to low complexity.

It belongs to the herpesviridae HHV-1 VP11/12 protein family. In terms of assembly, interacts with VP16.

The protein localises to the virion tegument. Its subcellular location is the host cell membrane. Abundant tegument protein. Trans-activates the immediate early genes. The chain is Tegument protein UL46 homolog from Equus caballus (Horse).